The primary structure comprises 497 residues: Cytochrome P450 monooxygenase cicH (497 aa).

Residues 2–19 (AILVRLFFALFVVSVYFF) form a helical membrane-spanning segment. Cys-439 is a heme binding site. Asn-443 is a glycosylation site (N-linked (GlcNAc...) asparagine).

It belongs to the cytochrome P450 family. Heme serves as cofactor.

The protein resides in the membrane. Its pathway is phytotoxin biosynthesis. Its function is as follows. Cytochrome P450 monooxygenase; part of the gene cluster that mediates the biosynthesis of cichorine, a phytotoxin active against knapweed, corn, and soybeans. The first step in the pathway is performed by the non-reducing polyketide synthase pkbA that condenses one acetyl-CoA starter unit with 3 malonyl-CoA units. PkbA also catalyzes one methylation step to produce 3-methylorsellinate. The nonribosomal peptide synthase-like protein cicB, the cytochrome P450 monooxygenase cicH and the O-methyltransferase cicE are involved in the conversion of 3-methylorsellinate into nidulol. CicB converts 3-methylorsellinate to a yet unidentified intermediate, cicH may play a ring-closing role for cichorine and cicE is plausibly responsible for the methylation of one of the phenol groups. The oxidoreductase cicC acts downstream with still unidentified enzymes to further convert nidulol into cichorine. The sequence is that of Cytochrome P450 monooxygenase cicH from Emericella nidulans (strain FGSC A4 / ATCC 38163 / CBS 112.46 / NRRL 194 / M139) (Aspergillus nidulans).